A 74-amino-acid chain; its full sequence is Ubiquitin-like protein FUBI (74 aa).

Belongs to the ubiquitin family.

This is Ubiquitin-like protein FUBI (Fau) from Mus spicilegus (Steppe mouse).